A 142-amino-acid polypeptide reads, in one-letter code: ATP synthase epsilon chain (142 aa).

It belongs to the ATPase epsilon chain family. In terms of assembly, F-type ATPases have 2 components, CF(1) - the catalytic core - and CF(0) - the membrane proton channel. CF(1) has five subunits: alpha(3), beta(3), gamma(1), delta(1), epsilon(1). CF(0) has three main subunits: a, b and c.

It is found in the cell inner membrane. Functionally, produces ATP from ADP in the presence of a proton gradient across the membrane. This is ATP synthase epsilon chain from Shewanella sediminis (strain HAW-EB3).